Reading from the N-terminus, the 1345-residue chain is CRISPR-associated endonuclease Cas9 (1345 aa).

Asp10 functions as the For RuvC-like nuclease domain in the catalytic mechanism. Mg(2+) contacts are provided by Asp10, Glu762, and Glu766. Positions 770–921 (TNQGRRNSQQ…DKAGFIKRQL (152 aa)) constitute an HNH Cas9-type domain. His840 functions as the Proton acceptor for HNH nuclease domain in the catalytic mechanism. His983 contacts Mg(2+).

This sequence belongs to the CRISPR-associated protein Cas9 family. Subtype II-A subfamily. In terms of assembly, monomer. Binds crRNA and tracrRNA. The cofactor is Mg(2+).

Its function is as follows. CRISPR (clustered regularly interspaced short palindromic repeat) is an adaptive immune system that provides protection against mobile genetic elements (viruses, transposable elements and conjugative plasmids). CRISPR clusters contain spacers, sequences complementary to antecedent mobile elements, and target invading nucleic acids. CRISPR clusters are transcribed and processed into CRISPR RNA (crRNA). In type II CRISPR systems correct processing of pre-crRNA requires a trans-encoded small RNA (tracrRNA), endogenous ribonuclease 3 (rnc) and this protein. The tracrRNA serves as a guide for ribonuclease 3-aided processing of pre-crRNA. Subsequently Cas9/crRNA/tracrRNA endonucleolytically cleaves linear or circular dsDNA target complementary to the spacer; Cas9 is inactive in the absence of the 2 guide RNAs (gRNA). Cas9 recognizes the protospacer adjacent motif (PAM) in the CRISPR repeat sequences to help distinguish self versus nonself, as targets within the bacterial CRISPR locus do not have PAMs. PAM recognition is also required for catalytic activity. Complements the gRNA coprocessing defect in a cas9 deletion in S.pyogenes strain 370 and cuts target plasmid in Cas9:gRNAs mixing experiments with S.thermophilus CRISPR3 from strain LMD-9. This chain is CRISPR-associated endonuclease Cas9, found in Streptococcus mutans serotype c (strain ATCC 700610 / UA159).